We begin with the raw amino-acid sequence, 136 residues long: DNA-directed RNA polymerase subunit omega (136 aa).

Residues 90–102 (SSPAAAAVAPQSS) show a composition bias toward low complexity. Positions 90–136 (SSPAAAAVAPQSSSDDKDVQFDRMSEEDLLRGLENLAPPTETDDEGE) are disordered. Over residues 103-120 (SDDKDVQFDRMSEEDLLR) the composition is skewed to basic and acidic residues.

Belongs to the RNA polymerase subunit omega family. In terms of assembly, the RNAP catalytic core consists of 2 alpha, 1 beta, 1 beta' and 1 omega subunit. When a sigma factor is associated with the core the holoenzyme is formed, which can initiate transcription.

It catalyses the reaction RNA(n) + a ribonucleoside 5'-triphosphate = RNA(n+1) + diphosphate. Promotes RNA polymerase assembly. Latches the N- and C-terminal regions of the beta' subunit thereby facilitating its interaction with the beta and alpha subunits. This is DNA-directed RNA polymerase subunit omega from Methylorubrum populi (strain ATCC BAA-705 / NCIMB 13946 / BJ001) (Methylobacterium populi).